The primary structure comprises 376 residues: VDFNVPLKEGVVKDPTRIAGSIPSIKKILETNPRGLVLMSHLGRPDGQRVEKHSLKPVLPKLEELLGTKVTFLNDCVGKDVEEAVKSSRNGEIILLENLRFHIEEEGKAVDAAGNKVKADPKAVKEFRKSLTNLGDLFFNDAFGTAHRAHSSMVGVDHKIRVAGYLLKKELEYFSKALESPTLPFCVVLGGAKVKDKIQLINSMLDNVNEMIIGGGMAFTFLKRLHNLEIGNSLFDEEGYKIVDELLEKAKKKNVKIHLPVDFLCGDSLEANANTAIHDLQSGIPKGWIGLDAGPKTIALNAEVIARANTIVWNGPQGRFEVDKFRNGSSDLLKKVIERTKTGATSIIGGGDTVNLVQQEKASNKVSHVSTGGGAS.

Positions 1, 2, 3, 4, 17, 40, 41, 43, 44, 99, 100, 147, and 148 each coordinate (2R)-3-phosphoglycerate. Glycine 191 is a binding site for ADP. Glycine 191 contacts CDP. Residues alanine 192 and lysine 193 each contribute to the AMP site. Alanine 192 is an ATP binding site. Alanine 192 lines the Mg(2+) pocket. Aspartate 196 contributes to the CDP binding site. Residue aspartate 196 participates in Mg(2+) binding. Lysine 197 serves as a coordination point for AMP. An ATP-binding site is contributed by lysine 197. Glycine 215 contributes to the ADP binding site. Residue glycine 215 participates in CDP binding. Positions 216 and 290 each coordinate AMP. Positions 216 and 290 each coordinate ATP. 2 residues coordinate CDP: glycine 315 and phenylalanine 320. Phenylalanine 320 contributes to the ADP binding site. Residue glutamate 321 coordinates AMP. The ATP site is built by glutamate 321, aspartate 352, and threonine 353. Position 352 (aspartate 352) interacts with Mg(2+).

It belongs to the phosphoglycerate kinase family. In terms of assembly, monomer. Mg(2+) serves as cofactor.

The enzyme catalyses (2R)-3-phosphoglycerate + ATP = (2R)-3-phospho-glyceroyl phosphate + ADP. It participates in carbohydrate degradation; glycolysis; pyruvate from D-glyceraldehyde 3-phosphate: step 2/5. In Glaucoma chattoni, this protein is Phosphoglycerate kinase (PGK).